The chain runs to 78 residues: Large ribosomal subunit protein bL28 (78 aa).

This sequence belongs to the bacterial ribosomal protein bL28 family.

The sequence is that of Large ribosomal subunit protein bL28 from Histophilus somni (strain 129Pt) (Haemophilus somnus).